Reading from the N-terminus, the 356-residue chain is UDP-N-acetylglucosamine--N-acetylmuramyl-(pentapeptide) pyrophosphoryl-undecaprenol N-acetylglucosamine transferase (356 aa).

UDP-N-acetyl-alpha-D-glucosamine contacts are provided by residues 11–13, Asn123, Arg159, and Ser192; that span reads TAG.

Belongs to the glycosyltransferase 28 family. MurG subfamily.

The protein localises to the cell membrane. The catalysed reaction is di-trans,octa-cis-undecaprenyl diphospho-N-acetyl-alpha-D-muramoyl-L-alanyl-D-glutamyl-meso-2,6-diaminopimeloyl-D-alanyl-D-alanine + UDP-N-acetyl-alpha-D-glucosamine = di-trans,octa-cis-undecaprenyl diphospho-[N-acetyl-alpha-D-glucosaminyl-(1-&gt;4)]-N-acetyl-alpha-D-muramoyl-L-alanyl-D-glutamyl-meso-2,6-diaminopimeloyl-D-alanyl-D-alanine + UDP + H(+). The protein operates within cell wall biogenesis; peptidoglycan biosynthesis. In terms of biological role, cell wall formation. Catalyzes the transfer of a GlcNAc subunit on undecaprenyl-pyrophosphoryl-MurNAc-pentapeptide (lipid intermediate I) to form undecaprenyl-pyrophosphoryl-MurNAc-(pentapeptide)GlcNAc (lipid intermediate II). The polypeptide is UDP-N-acetylglucosamine--N-acetylmuramyl-(pentapeptide) pyrophosphoryl-undecaprenol N-acetylglucosamine transferase (Tropheryma whipplei (strain Twist) (Whipple's bacillus)).